Here is a 150-residue protein sequence, read N- to C-terminus: 3-hydroxyacyl-[acyl-carrier-protein] dehydratase FabZ (150 aa).

The active site involves histidine 56.

The protein belongs to the thioester dehydratase family. FabZ subfamily.

The protein resides in the cytoplasm. It catalyses the reaction a (3R)-hydroxyacyl-[ACP] = a (2E)-enoyl-[ACP] + H2O. Involved in unsaturated fatty acids biosynthesis. Catalyzes the dehydration of short chain beta-hydroxyacyl-ACPs and long chain saturated and unsaturated beta-hydroxyacyl-ACPs. The polypeptide is 3-hydroxyacyl-[acyl-carrier-protein] dehydratase FabZ (Desulfotalea psychrophila (strain LSv54 / DSM 12343)).